The primary structure comprises 394 residues: Elongation factor Tu 2 (394 aa).

The region spanning 10-204 (KPHVNVGTIG…ALDSYIPEPE (195 aa)) is the tr-type G domain. The interval 19–26 (GHVDHGKT) is G1. GTP is bound at residue 19–26 (GHVDHGKT). Residue Thr-26 coordinates Mg(2+). Residues 60-64 (GITIS) are G2. The G3 stretch occupies residues 81–84 (DCPG). GTP is bound by residues 81–85 (DCPGH) and 136–139 (NKCD). Residues 136 to 139 (NKCD) are G4. The G5 stretch occupies residues 174-176 (SAL).

It belongs to the TRAFAC class translation factor GTPase superfamily. Classic translation factor GTPase family. EF-Tu/EF-1A subfamily. In terms of assembly, monomer.

The protein localises to the cytoplasm. The catalysed reaction is GTP + H2O = GDP + phosphate + H(+). In terms of biological role, GTP hydrolase that promotes the GTP-dependent binding of aminoacyl-tRNA to the A-site of ribosomes during protein biosynthesis. The chain is Elongation factor Tu 2 from Photorhabdus laumondii subsp. laumondii (strain DSM 15139 / CIP 105565 / TT01) (Photorhabdus luminescens subsp. laumondii).